The following is a 394-amino-acid chain: Elongation factor Tu (394 aa).

In terms of domain architecture, tr-type G spans 10 to 205 (KPHVNIGTIG…VDNWIPLPPR (196 aa)). The segment at 19-26 (GHVDHGKT) is G1. 19–26 (GHVDHGKT) serves as a coordination point for GTP. Residue Thr-26 participates in Mg(2+) binding. The interval 60–64 (GITIN) is G2. Residues 81-84 (DCPG) are G3. Residues 81–85 (DCPGH) and 136–139 (NKCD) contribute to the GTP site. The interval 136-139 (NKCD) is G4. Residues 174-176 (SAL) are G5.

It belongs to the TRAFAC class translation factor GTPase superfamily. Classic translation factor GTPase family. EF-Tu/EF-1A subfamily. Monomer.

Its subcellular location is the cytoplasm. It catalyses the reaction GTP + H2O = GDP + phosphate + H(+). Its function is as follows. GTP hydrolase that promotes the GTP-dependent binding of aminoacyl-tRNA to the A-site of ribosomes during protein biosynthesis. The protein is Elongation factor Tu of Bacteroides thetaiotaomicron (strain ATCC 29148 / DSM 2079 / JCM 5827 / CCUG 10774 / NCTC 10582 / VPI-5482 / E50).